The chain runs to 122 residues: Truncated CrmB protein (122 aa).

The protein is truncated in this strain and presumably inactive. It has similarities with variola virus CrmB, but the product is inactivated due to several premature stop codons. The sequence is that of Truncated CrmB protein (OPG002) from Bos taurus (Bovine).